Reading from the N-terminus, the 265-residue chain is MSSASYLQRAEAHPSPVASKLLKLMHEKKTNLCASLDVTTTSELLKLVDTLGPYICLLKTHVDILSDFSFENTVKPLKEMAAKHNFLIFEDRKFADIGNTVKLQYTSGVYKIAEWADITNAHGVTGQGIVTGLKQGAEETTNEPRGLLMLAELSSKGSLAHGEYTKGTVDIAKSDKDFVIGFIAQKDMGGRDEGFDWLIMTPGVGLDDKGDALGQQYRTVDEVFSTGTDIIIVGRGLFAKGRDPKTEGERYRKAGWDAYLKRIGN.

Residues Asp37, 59–61 (KTH), 91–100 (DRKFADIGNT), Tyr217, and Arg235 contribute to the substrate site. The active-site Proton donor is the Lys93.

Belongs to the OMP decarboxylase family.

The catalysed reaction is orotidine 5'-phosphate + H(+) = UMP + CO2. It functions in the pathway pyrimidine metabolism; UMP biosynthesis via de novo pathway; UMP from orotate: step 2/2. This Candida glabrata (strain ATCC 2001 / BCRC 20586 / JCM 3761 / NBRC 0622 / NRRL Y-65 / CBS 138) (Yeast) protein is Orotidine 5'-phosphate decarboxylase (URA3).